The primary structure comprises 894 residues: E3 ubiquitin-protein ligase SH3RF1 (894 aa).

The RING-type zinc finger occupies 12-53 (CPVCLERLDASAKVLPCQHTFCKRCLLGIVGSRNELRCPECR). 2 consecutive SH3 domains span residues 134–193 (PQLP…IIKP) and 196–259 (QPPP…FNSA). Residues 274–323 (VDTAECPSATAAQSSSASKHSDTKKNTRKRHSFTSLTMANKSSQASQNRH) form a disordered region. Positions 281–291 (SATAAQSSSAS) are enriched in low complexity. The tract at residues 293-363 (HSDTKKNTRK…APSQVHISTT (71 aa)) is interaction with RAC1. At S305 the chain carries Phosphoserine. Over residues 306-322 (FTSLTMANKSSQASQNR) the composition is skewed to polar residues. Positions 448 to 551 (HLRPQTRPSV…STAGGPAQKP (104 aa)) are interaction with AKT2. One can recognise an SH3 3 domain in the interval 453–514 (TRPSVYVAIY…PGNYVAPVTR (62 aa)). Disordered regions lie at residues 526-556 (MSTAGQASRGVTMVSPSTAGGPAQKPQGNGV) and 682-751 (LETE…PTLD). S540 is subject to Phosphoserine. Positions 700–713 (SPESAASACGNSSA) are enriched in polar residues. Residues 715–726 (KPDKDSKKEKKG) show a composition bias toward basic and acidic residues. Position 743 is a phosphoserine (S743). The 60-residue stretch at 835-894 (VVCERHRVVVSYPPQSEAELELKEGDIVFVHKKREDGWFKGTLQRNGKTGLFPGSFVENI) folds into the SH3 4 domain.

It belongs to the SH3RF family. Interacts with HERP1. Interacts with RAC1; in a GTP-dependent manner. Interacts with MAP3K10/MLK2 and MAP3K11/MLK3. Interacts with MAPK8IP; this interaction leads to the PJAC complex (POSH-JIP or SH3RF1/MAPK8IP apoptotic complex) with a 1:1 ratio. Interacts with SIAH1. Probably part of a signaling complex that may contain SH3RF1, MAPK8IP, DLK1, MAP2K4/MKK4, MAP2K7/MKK7, MAPK8/JNK1, MAPK9/JNK2, AKT1 and AKT2. Found in a complex with RAC2, MAP3K7/TAK1, MAP2K7/MKK7, MAPK8IP1/JIP1, MAPK8/JNK1 and MAPK9/JNK2. Found in a complex with RAC1, MAP3K11/MLK3, MAP2K7/MKK7, MAPK8IP1/JIP1 and MAPK8/JNK1. Interacts with SH3RF2. Post-translationally, phosphorylated at Ser-305 by AKT1 and AKT2. When phosphorylated, it has reduced ability to bind Rac. Autoubiquitinated. Ubiquitinated by SH3RF2, leading to proteasome-mediated degradation.

Its subcellular location is the cytoplasm. The protein resides in the perinuclear region. It is found in the cell projection. The protein localises to the lamellipodium. It localises to the golgi apparatus. Its subcellular location is the trans-Golgi network. It catalyses the reaction S-ubiquitinyl-[E2 ubiquitin-conjugating enzyme]-L-cysteine + [acceptor protein]-L-lysine = [E2 ubiquitin-conjugating enzyme]-L-cysteine + N(6)-ubiquitinyl-[acceptor protein]-L-lysine.. It participates in protein modification; protein ubiquitination. Its function is as follows. Has E3 ubiquitin-protein ligase activity. In the absence of an external substrate, it can catalyze self-ubiquitination. Stimulates ubiquitination of potassium channel KCNJ1, enhancing it's dynamin-dependent and clathrin-independent endocytosis. Acts as a scaffold protein that coordinates with MAPK8IP1/JIP1 in organizing different components of the JNK pathway, including RAC1 or RAC2, MAP3K11/MLK3 or MAP3K7/TAK1, MAP2K7/MKK7, MAPK8/JNK1 and/or MAPK9/JNK2 into a functional multiprotein complex to ensure the effective activation of the JNK signaling pathway. Regulates the differentiation of CD4(+) and CD8(+) T-cells and promotes T-helper 1 (Th1) cell differentiation. Regulates the activation of MAPK8/JNK1 and MAPK9/JNK2 in CD4(+) T-cells and the activation of MAPK8/JNK1 in CD8(+) T-cells. Plays a crucial role in the migration of neocortical neurons in the developing brain. Controls proper cortical neuronal migration and the formation of proximal cytoplasmic dilation in the leading process (PCDLP) in migratory neocortical neurons by regulating the proper localization of activated RAC1 and F-actin assembly. This Rattus norvegicus (Rat) protein is E3 ubiquitin-protein ligase SH3RF1 (Sh3rf1).